A 464-amino-acid polypeptide reads, in one-letter code: GDNF family receptor alpha-2 (464 aa).

An N-terminal signal peptide occupies residues 1 to 21 (MILANAFCLFFFLDETLRSLA). 14 cysteine pairs are disulfide-bonded: Cys40–Cys93, Cys47–Cys53, Cys63–Cys78, Cys95–Cys105, Cys161–Cys222, Cys168–Cys174, Cys185–Cys200, Cys195–Cys241, Cys224–Cys229, Cys251–Cys323, Cys258–Cys264, Cys275–Cys293, Cys285–Cys347, and Cys325–Cys335. A glycan (N-linked (GlcNAc...) asparagine) is linked at Asn52. Asn357 carries N-linked (GlcNAc...) asparagine glycosylation. Residues 360 to 374 (DVNLSPKSPPFQATQ) show a composition bias toward polar residues. Residues 360–392 (DVNLSPKSPPFQATQAPRVDKTPSLPDDLSDST) are disordered. Positions 381–392 (TPSLPDDLSDST) are enriched in low complexity. N-linked (GlcNAc...) asparagine glycosylation occurs at Asn413. Asn440 is lipidated: GPI-anchor amidated asparagine. Positions 441–464 (SGPRRTRPSAALTAASFLMLKLAL) are cleaved as a propeptide — removed in mature form.

This sequence belongs to the GDNFR family. In terms of assembly, interacts with NRTN ligand and RET: forms a 2:2:2 ternary complex composed of NRTN ligand, GFRA2 and RET receptor. Also forms a 4:4:4 tetrameric complex composed of 4 copies of NRTN ligand, GFRA2 and RET receptor, which prevents endocytosis of RET. Interacts with SORL1.

The protein localises to the cell membrane. In terms of biological role, receptor for neurturin (NRTN), a growth factor that supports the survival of sympathetic neurons. NRTN-binding leads to autophosphorylation and activation of the RET receptor. Also able to mediate GDNF signaling through the RET tyrosine kinase receptor. In Bos taurus (Bovine), this protein is GDNF family receptor alpha-2 (GFRA2).